A 234-amino-acid polypeptide reads, in one-letter code: Endonuclease V (234 aa).

Mg(2+) contacts are provided by aspartate 36 and aspartate 104.

Belongs to the endonuclease V family. Mg(2+) is required as a cofactor.

It is found in the cytoplasm. It catalyses the reaction Endonucleolytic cleavage at apurinic or apyrimidinic sites to products with a 5'-phosphate.. In terms of biological role, DNA repair enzyme involved in the repair of deaminated bases. Selectively cleaves double-stranded DNA at the second phosphodiester bond 3' to a deoxyinosine leaving behind the intact lesion on the nicked DNA. The protein is Endonuclease V of Yersinia pseudotuberculosis serotype O:1b (strain IP 31758).